Consider the following 159-residue polypeptide: 3-hydroxyacyl-[acyl-carrier-protein] dehydratase FabZ (159 aa).

His-58 is an active-site residue.

It belongs to the thioester dehydratase family. FabZ subfamily.

It is found in the cytoplasm. The enzyme catalyses a (3R)-hydroxyacyl-[ACP] = a (2E)-enoyl-[ACP] + H2O. Its function is as follows. Involved in unsaturated fatty acids biosynthesis. Catalyzes the dehydration of short chain beta-hydroxyacyl-ACPs and long chain saturated and unsaturated beta-hydroxyacyl-ACPs. This Helicobacter pylori (strain Shi470) protein is 3-hydroxyacyl-[acyl-carrier-protein] dehydratase FabZ.